The chain runs to 425 residues: Formyl-CoA:oxalate CoA-transferase (425 aa).

CoA is bound by residues 17 to 18 (QS), Arg-38, 72 to 75 (LDTK), 96 to 98 (NFG), Arg-104, and 136 to 139 (KVYE). Asp-168 acts as the Nucleophile in catalysis. 247 to 249 (GGQ) is a binding site for substrate.

Belongs to the CoA-transferase III family. Frc subfamily. Homodimer.

The catalysed reaction is formyl-CoA + oxalate = oxalyl-CoA + formate. It functions in the pathway metabolic intermediate degradation; oxalate degradation; CO(2) and formate from oxalate: step 1/2. In terms of biological role, involved in the catabolism of oxalate and in the adapatation to low pH via the induction of the oxalate-dependent acid tolerance response (ATR). Catalyzes the transfer of the CoA moiety from formyl-CoA to oxalate. This is Formyl-CoA:oxalate CoA-transferase from Rhodopseudomonas palustris (strain TIE-1).